A 155-amino-acid chain; its full sequence is Protein-export protein SecB (155 aa).

This sequence belongs to the SecB family. Homotetramer, a dimer of dimers. One homotetramer interacts with 1 SecA dimer.

It is found in the cytoplasm. Functionally, one of the proteins required for the normal export of preproteins out of the cell cytoplasm. It is a molecular chaperone that binds to a subset of precursor proteins, maintaining them in a translocation-competent state. It also specifically binds to its receptor SecA. The protein is Protein-export protein SecB of Vibrio atlanticus (strain LGP32) (Vibrio splendidus (strain Mel32)).